A 232-amino-acid polypeptide reads, in one-letter code: Peptidoglycan-recognition protein LB (232 aa).

Residues 1-15 (MTALGLVLLSMMGYS) form the signal peptide. Residues 53-179 (APYVIIHHSY…RQVRDTECPG (127 aa)) enclose the N-acetylmuramoyl-L-alanine amidase domain. His59 is a binding site for Zn(2+). A disulfide bond links Cys67 and Cys73. The Zn(2+) site is built by His169 and Cys177. Asn196 carries an N-linked (GlcNAc...) asparagine glycan. The disordered stretch occupies residues 213 to 232 (HPQAAAPQKPHQSPPAAPKV).

The protein belongs to the N-acetylmuramoyl-L-alanine amidase 2 family. As to quaternary structure, monomer. Zn(2+) serves as cofactor. As to expression, widely expressed.

The protein resides in the secreted. It catalyses the reaction Hydrolyzes the link between N-acetylmuramoyl residues and L-amino acid residues in certain cell-wall glycopeptides.. N-acetylmuramyl-L-alanine amidase involved in innate immunity by degrading bacterial peptidoglycans (PGN). Probably plays a scavenger role by digesting biologically active PGN into biologically inactive fragments. Has no direct bacteriolytic activity. This chain is Peptidoglycan-recognition protein LB (PGRP-LB), found in Drosophila melanogaster (Fruit fly).